Consider the following 871-residue polypeptide: Probable inorganic carbon transporter subunit DabA (871 aa).

4 residues coordinate Zn(2+): Cys-396, Asp-398, His-577, and Cys-592.

This sequence belongs to the inorganic carbon transporter (TC 9.A.2) DabA family. As to quaternary structure, forms a complex with DabB. Requires Zn(2+) as cofactor.

Its subcellular location is the cell membrane. In terms of biological role, part of an energy-coupled inorganic carbon pump. This is Probable inorganic carbon transporter subunit DabA from Bacillus subtilis (strain 168).